The chain runs to 664 residues: Bifunctional polymyxin resistance protein ArnA (664 aa).

The segment at 1–308 (MSTKAVVFAY…EFGLVAGSQM (308 aa)) is formyltransferase ArnAFT. Catalysis depends on H106, which acts as the Proton donor; for formyltransferase activity. (6R)-10-formyltetrahydrofolate is bound by residues R116 and 138-142 (VKRAD). The interval 318 to 664 (RRTRVLILGV…EAMAEKADQC (347 aa)) is dehydrogenase ArnADH. NAD(+) contacts are provided by residues D351 and 372-373 (DI). Residues A397, Y402, and 436 to 437 (TS) contribute to the UDP-alpha-D-glucuronate site. Catalysis depends on E438, which acts as the Proton acceptor; for decarboxylase activity. UDP-alpha-D-glucuronate-binding positions include R464, N495, 529 to 538 (RLVDGGAQKR), and Y616. The active-site Proton donor; for decarboxylase activity is the R622.

This sequence in the N-terminal section; belongs to the Fmt family. UDP-L-Ara4N formyltransferase subfamily. In the C-terminal section; belongs to the NAD(P)-dependent epimerase/dehydratase family. UDP-glucuronic acid decarboxylase subfamily. Homohexamer, formed by a dimer of trimers.

The catalysed reaction is UDP-alpha-D-glucuronate + NAD(+) = UDP-beta-L-threo-pentopyranos-4-ulose + CO2 + NADH. The enzyme catalyses UDP-4-amino-4-deoxy-beta-L-arabinose + (6R)-10-formyltetrahydrofolate = UDP-4-deoxy-4-formamido-beta-L-arabinose + (6S)-5,6,7,8-tetrahydrofolate + H(+). It participates in nucleotide-sugar biosynthesis; UDP-4-deoxy-4-formamido-beta-L-arabinose biosynthesis; UDP-4-deoxy-4-formamido-beta-L-arabinose from UDP-alpha-D-glucuronate: step 1/3. Its pathway is nucleotide-sugar biosynthesis; UDP-4-deoxy-4-formamido-beta-L-arabinose biosynthesis; UDP-4-deoxy-4-formamido-beta-L-arabinose from UDP-alpha-D-glucuronate: step 3/3. It functions in the pathway bacterial outer membrane biogenesis; lipopolysaccharide biosynthesis. Bifunctional enzyme that catalyzes the oxidative decarboxylation of UDP-glucuronic acid (UDP-GlcUA) to UDP-4-keto-arabinose (UDP-Ara4O) and the addition of a formyl group to UDP-4-amino-4-deoxy-L-arabinose (UDP-L-Ara4N) to form UDP-L-4-formamido-arabinose (UDP-L-Ara4FN). The modified arabinose is attached to lipid A and is required for resistance to polymyxin and cationic antimicrobial peptides. This Pseudomonas syringae pv. syringae (strain B728a) protein is Bifunctional polymyxin resistance protein ArnA.